The sequence spans 261 residues: Ribonuclease PH (261 aa).

Residues Arg88 and 126–128 (GTR) contribute to the phosphate site. Residues 242-261 (PYPGVLPEPKNPEPKKKFGA) form a disordered region. Positions 251–261 (KNPEPKKKFGA) are enriched in basic and acidic residues.

This sequence belongs to the RNase PH family. As to quaternary structure, homohexameric ring arranged as a trimer of dimers.

The catalysed reaction is tRNA(n+1) + phosphate = tRNA(n) + a ribonucleoside 5'-diphosphate. Phosphorolytic 3'-5' exoribonuclease that plays an important role in tRNA 3'-end maturation. Removes nucleotide residues following the 3'-CCA terminus of tRNAs; can also add nucleotides to the ends of RNA molecules by using nucleoside diphosphates as substrates, but this may not be physiologically important. Probably plays a role in initiation of 16S rRNA degradation (leading to ribosome degradation) during starvation. In Rhodococcus erythropolis (strain PR4 / NBRC 100887), this protein is Ribonuclease PH.